The following is a 218-amino-acid chain: Ras-related protein YPT3 (218 aa).

20–27 provides a ligand contact to GTP; the sequence is GDSGVGKS. The short motif at 42–50 is the Effector region element; sequence SKSTIGVEF. GTP is bound by residues 68 to 72 and 126 to 129; these read DTAGQ and NKSD. The tract at residues 186-205 is disordered; it reads GDEGATSSAPPKGETINIKD. S-geranylgeranyl cysteine attachment occurs at residues Cys-215 and Cys-216.

This sequence belongs to the small GTPase superfamily. Rab family. Its expression is weak in leaves, higher in stems and roots, but highest in petals, stigma and stamens.

The protein localises to the cell membrane. Functionally, protein transport. Probably involved in vesicular traffic. This Nicotiana plumbaginifolia (Leadwort-leaved tobacco) protein is Ras-related protein YPT3 (YPT3).